A 773-amino-acid chain; its full sequence is Mitogen-activated protein kinase kinase kinase 9 (773 aa).

The span at 1-14 (MKKSSDKSPVRQHD) shows a compositional bias: basic and acidic residues. The segment at 1-35 (MKKSSDKSPVRQHDTATQINSDAVSSSTSFTDSDS) is disordered. A compositionally biased stretch (low complexity) spans 21-35 (SDAVSSSTSFTDSDS). 2 positions are modified to phosphoserine: Ser79 and Ser150. Residues 100 to 493 (FDKILALMKK…VSNTSPICVS (394 aa)) form a regulatory region region. Ser365 is modified (phosphoserine; by MAPK4). The segment at 426-455 (EIVRRPSSSSSSENGCDEEEAEDDKVEKEE) is disordered. Residues 440-449 (GCDEEEAEDD) show a composition bias toward acidic residues. Residues 501-755 (WQKGQLLRQG…ATELLNHPFV (255 aa)) enclose the Protein kinase domain. ATP is bound by residues 507 to 515 (LRQGSFGSV) and Lys529. Asp624 serves as the catalytic Proton acceptor. Ser768 is subject to Phosphoserine.

The protein belongs to the protein kinase superfamily. STE Ser/Thr protein kinase family. MAP kinase kinase kinase subfamily. As to quaternary structure, interacts with MPK4. Post-translationally, phosphorylated by MPK4 upon treatment with flg22. In terms of tissue distribution, expressed at least in rosette leaves (at protein level).

The catalysed reaction is L-seryl-[protein] + ATP = O-phospho-L-seryl-[protein] + ADP + H(+). The enzyme catalyses L-threonyl-[protein] + ATP = O-phospho-L-threonyl-[protein] + ADP + H(+). In terms of biological role, triggers SUMM2-mediated immune responses, including cell death and defense responses. Probably inhibited by the MEKK1-MKK1/ MKK2-MPK4 kinase cascade to adjust plant defense. Seems to contribute in transducing external glutamate (L-Glu) signal that elicits large-scale changes in root architecture. The sequence is that of Mitogen-activated protein kinase kinase kinase 9 from Arabidopsis thaliana (Mouse-ear cress).